The following is a 450-amino-acid chain: tRNA (guanine-N(7)-)-methyltransferase non-catalytic subunit TRM82 (450 aa).

Residues 69–82 (AAKKLKTNEGEAIE) are compositionally biased toward basic and acidic residues. The segment at 69-103 (AAKKLKTNEGEAIERPGNQRRVPLPGKDPKVPVPG) is disordered. WD repeat units follow at residues 108 to 147 (PVYQ…KDNC), 200 to 241 (GHVS…VIDK), and 245 to 285 (GHKE…LMSS).

The protein belongs to the WD repeat TRM82 family. Forms a heterodimer with the catalytic subunit TRM8.

The protein localises to the nucleus. The protein operates within tRNA modification; N(7)-methylguanine-tRNA biosynthesis. In terms of biological role, required for the formation of N(7)-methylguanine at position 46 (m7G46) in tRNA. In the complex, it is required to stabilize and induce conformational changes of the catalytic subunit. In Eremothecium gossypii (strain ATCC 10895 / CBS 109.51 / FGSC 9923 / NRRL Y-1056) (Yeast), this protein is tRNA (guanine-N(7)-)-methyltransferase non-catalytic subunit TRM82.